A 148-amino-acid polypeptide reads, in one-letter code: uncharacterized protein (148 aa).

The HTH asnC-type domain occupies 3–64 (IDDLDRKILS…KLNYEKLGYE (62 aa)). A DNA-binding region (H-T-H motif) is located at residues 22–41 (YREIAKKLNVAVGTIYNRIK).

This is an uncharacterized protein from Pyrococcus furiosus (strain ATCC 43587 / DSM 3638 / JCM 8422 / Vc1).